A 1412-amino-acid polypeptide reads, in one-letter code: ABC transporter C family member 3 (1412 aa).

The segment at 1 to 34 (MELEEVGVEANQPNNDQGSKKQNKNKDKKVKKEK) is disordered. Positions 21-34 (KQNKNKDKKVKKEK) are enriched in basic residues. 6 helical membrane passes run 115 to 135 (FGLY…SQFV), 161 to 181 (MGYY…VCLY), 236 to 256 (VFQL…CLAL), 261 to 281 (IGWP…FNGI), 346 to 366 (AMLI…VFSS), and 379 to 399 (IFAA…LPII). Positions 119 to 405 (FVLSWFFYAI…LPIIVALGIQ (287 aa)) constitute an ABC transmembrane type-1 1 domain. The 224-residue stretch at 439–662 (IRDATLTWNQ…QKEFSGLLQA (224 aa)) folds into the ABC transporter 1 domain. An ATP-binding site is contributed by 474–481 (GSVGSGKS). 5 helical membrane passes run 724-744 (WKYI…FFLM), 787-807 (IYIG…FLFF), 854-874 (NLMA…VATL), 875-895 (IIIS…CIIF), and 967-987 (WLGL…CLFI). One can recognise an ABC transmembrane type-1 2 domain in the interval 735–1025 (FLMAFIFFLM…ATLQAADTET (291 aa)). The region spanning 1062-1296 (ITFDNLVMRY…PAGLLNWLVE (235 aa)) is the ABC transporter 2 domain. ATP is bound at residue 1096–1103 (GRTGAGKS). Positions 1316 to 1412 (GVNIDQITPP…DNDNSEAGDN (97 aa)) are disordered. A compositionally biased stretch (polar residues) spans 1342–1351 (NINSPPQQSL). Residues 1367-1397 (DNNNNNNNNNNNNNNNNNNNNNNNNNNNNND) show a composition bias toward low complexity. A compositionally biased stretch (acidic residues) spans 1398-1412 (NDNDNDNDNSEAGDN).

The protein belongs to the ABC transporter superfamily. ABCC family. Conjugate transporter (TC 3.A.1.208) subfamily.

The protein localises to the membrane. In Dictyostelium discoideum (Social amoeba), this protein is ABC transporter C family member 3 (abcC3).